The chain runs to 1006 residues: Serine/threonine-protein phosphatase BSL3 (1006 aa).

A disordered region spans residues 1-67; the sequence is MDLDSSMVPE…QQQQQPQVTA (67 aa). 2 stretches are compositionally biased toward low complexity: residues 38 to 47 and 54 to 67; these read SESESASLTP and QQQQQQQQQPQVTA. Kelch repeat units lie at residues 138 to 184, 242 to 290, 295 to 345, 351 to 398, and 419 to 465; these read TSAG…VATA, YLMA…TASA, LLLL…VFVN, SGGA…DAAG, and LIFI…TPPG. 2 disordered regions span residues 454 to 494 and 552 to 579; these read AAAA…LGSP and GEVELPDRDRGAEATPSGKPSLSLIKPD. Serine 616 bears the Phosphoserine mark. 4 residues coordinate Mn(2+): aspartate 709, histidine 711, aspartate 743, and asparagine 775. Histidine 776 (proton donor) is an active-site residue. Mn(2+) contacts are provided by histidine 828 and histidine 907. Serine 964 is modified (phosphoserine). A disordered region spans residues 982 to 1006; that stretch reads NVNRPPTPTRGRPQNPNDRGSLAWI.

Belongs to the PPP phosphatase family. BSU subfamily. Mn(2+) serves as cofactor. As to expression, expressed throughout the plant, with a higher level in younger parts.

Its subcellular location is the nucleus. It catalyses the reaction O-phospho-L-seryl-[protein] + H2O = L-seryl-[protein] + phosphate. It carries out the reaction O-phospho-L-threonyl-[protein] + H2O = L-threonyl-[protein] + phosphate. Its function is as follows. Phosphatase involved in elongation process, probably by acting as a regulator of brassinolide signaling. In Arabidopsis thaliana (Mouse-ear cress), this protein is Serine/threonine-protein phosphatase BSL3 (BSL3).